The following is a 1042-amino-acid chain: Isoleucine--tRNA ligase (1042 aa).

A 'HIGH' region motif is present at residues 48 to 58 (PFATGLPHFGH). Positions 594 to 598 (KMSKS) match the 'KMSKS' region motif. Residue lysine 597 participates in ATP binding.

Belongs to the class-I aminoacyl-tRNA synthetase family. IleS type 2 subfamily. Monomer. Zn(2+) is required as a cofactor.

The protein localises to the cytoplasm. It carries out the reaction tRNA(Ile) + L-isoleucine + ATP = L-isoleucyl-tRNA(Ile) + AMP + diphosphate. Catalyzes the attachment of isoleucine to tRNA(Ile). As IleRS can inadvertently accommodate and process structurally similar amino acids such as valine, to avoid such errors it has two additional distinct tRNA(Ile)-dependent editing activities. One activity is designated as 'pretransfer' editing and involves the hydrolysis of activated Val-AMP. The other activity is designated 'posttransfer' editing and involves deacylation of mischarged Val-tRNA(Ile). This is Isoleucine--tRNA ligase from Borreliella burgdorferi (strain ZS7) (Borrelia burgdorferi).